A 360-amino-acid polypeptide reads, in one-letter code: Type II methyltransferase M2.ScrFI (360 aa).

The SAM-dependent MTase C5-type domain occupies 2–360 (LRVFEAFAGY…SLFKELFKSQ (359 aa)). Cysteine 127 is a catalytic residue.

It belongs to the class I-like SAM-binding methyltransferase superfamily. C5-methyltransferase family.

It carries out the reaction a 2'-deoxycytidine in DNA + S-adenosyl-L-methionine = a 5-methyl-2'-deoxycytidine in DNA + S-adenosyl-L-homocysteine + H(+). Its function is as follows. A methylase, recognizes the double-stranded sequence 5'-CCNGG-3', methylates C-2 on both strands, and protects the DNA from cleavage by the ScrFI endonuclease. The protein is Type II methyltransferase M2.ScrFI (scrFIBM) of Lactococcus lactis subsp. cremoris (Streptococcus cremoris).